The sequence spans 214 residues: Large ribosomal subunit protein uL3 (214 aa).

Q153 is subject to N5-methylglutamine.

This sequence belongs to the universal ribosomal protein uL3 family. As to quaternary structure, part of the 50S ribosomal subunit. Forms a cluster with proteins L14 and L19. Post-translationally, methylated by PrmB.

Functionally, one of the primary rRNA binding proteins, it binds directly near the 3'-end of the 23S rRNA, where it nucleates assembly of the 50S subunit. The sequence is that of Large ribosomal subunit protein uL3 from Methylobacillus flagellatus (strain ATCC 51484 / DSM 6875 / VKM B-1610 / KT).